The primary structure comprises 223 residues: Agamous-like MADS-box protein AGL11 (223 aa).

The MADS-box domain maps to 1 to 61 (MGRGKIEIKR…GRVYEYSNNN (61 aa)). The K-box domain maps to 87–177 (AQYYQQESAK…RTKIAEVERL (91 aa)).

Expressed in flowers and seeds. Expressed in endotesta cell layer of developing seeds.

Its subcellular location is the nucleus. Its function is as follows. Probable transcription factor involved in seed development. Plays a role in seed morphogenesis by promoting the correct development of endotesta cell layer, which directs the further development of the seed coat, the endosperm, and consequently the embryo. The sequence is that of Agamous-like MADS-box protein AGL11 from Vitis vinifera (Grape).